A 75-amino-acid chain; its full sequence is uncharacterized protein (75 aa).

This is an uncharacterized protein from Escherichia coli (strain K12).